The primary structure comprises 207 residues: Small ribosomal subunit protein uS4 (207 aa).

A compositionally biased stretch (basic and acidic residues) spans 29-38; the sequence is SDKAKFDSKP. A disordered region spans residues 29–54; that stretch reads SDKAKFDSKPGQHGRTSGTRTSDYGL. Residues 42–52 are compositionally biased toward polar residues; it reads GRTSGTRTSDY. Residues 97–160 form the S4 RNA-binding domain; that stretch reads SRLDNVVYRM…KKQTRIAEAL (64 aa).

Belongs to the universal ribosomal protein uS4 family. In terms of assembly, part of the 30S ribosomal subunit. Contacts protein S5. The interaction surface between S4 and S5 is involved in control of translational fidelity.

Its function is as follows. One of the primary rRNA binding proteins, it binds directly to 16S rRNA where it nucleates assembly of the body of the 30S subunit. In terms of biological role, with S5 and S12 plays an important role in translational accuracy. The sequence is that of Small ribosomal subunit protein uS4 from Polaromonas naphthalenivorans (strain CJ2).